The chain runs to 1698 residues: Protein 4.1 homolog (1698 aa).

The segment at Met-1–Pro-31 is disordered. A compositionally biased stretch (low complexity) spans Glu-12–Ser-27. The region spanning Ala-32–Thr-314 is the FERM domain. A hydrophilic region spans residues Pro-317–Glu-434. Disordered regions lie at residues Gly-335–Arg-361 and Glu-374–Thr-710. Residues Glu-374–Ala-448 are compositionally biased toward basic and acidic residues. Residues Lys-449–Ala-461 show a composition bias toward low complexity. Ser-471, Ser-474, and Ser-478 each carry phosphoserine. Basic and acidic residues predominate over residues Lys-499–Gly-514. The segment covering Asp-562 to Ser-571 has biased composition (polar residues). Phosphoserine is present on Ser-566. Residues Tyr-579–Gly-589 show a composition bias toward basic and acidic residues. The segment covering Glu-594–Lys-603 has biased composition (polar residues). Over residues Ala-618–Lys-627 the composition is skewed to basic and acidic residues. A phosphoserine mark is found at Ser-659 and Ser-687. Residues Arg-684–Ser-696 are compositionally biased toward polar residues. Thr-689 is modified (phosphothreonine). Phosphoserine is present on residues Ser-697, Ser-1398, Ser-1401, and Ser-1402. Residues Gly-1286–Gln-1698 form a C-terminal (CTD) region. Thr-1407 is subject to Phosphothreonine. Basic and acidic residues predominate over residues Leu-1509–Asn-1532. The disordered stretch occupies residues Leu-1509–Thr-1599. The segment covering Lys-1533–Gln-1554 has biased composition (polar residues). A compositionally biased stretch (low complexity) spans Val-1561 to Thr-1571. Over residues Arg-1584–Thr-1599 the composition is skewed to polar residues. Ser-1590 is subject to Phosphoserine.

At onset of germ band retraction, expression is seen in epidermis, hindgut and foregut. During retraction, expression extends to tracheal branches and salivary glands.

The protein localises to the cell junction. The protein resides in the septate junction. An integral component of the septate junction. May play a role in cell-cell interactions that are necessary for proper development. Vital for embryonic development. This chain is Protein 4.1 homolog (cora), found in Drosophila melanogaster (Fruit fly).